Consider the following 165-residue polypeptide: Methyl-coenzyme M reductase II operon protein D (165 aa).

As to quaternary structure, MCR is composed of three subunits: alpha, beta, and gamma. The function of protein D is not known.

The polypeptide is Methyl-coenzyme M reductase II operon protein D (mrtD) (Methanothermus fervidus (strain ATCC 43054 / DSM 2088 / JCM 10308 / V24 S)).